Consider the following 402-residue polypeptide: MDIATGPESLERCFPRGQTDCAKMLDGIKMEEHALRPGPATLGVLLGSDCPHPAVCEGCQRPISDRFLMRVNESSWHEECLQCAACQQALTTSCYFRDRKLYCKQDYQQLFAAKCSGCMEKIAPTEFVMRALECVYHLGCFCCCVCERQLRKGDEFVLKEGQLLCKGDYEKEKDLLSSVSPDESDSVKSEDEDGDMKPAKGQGSQSKGSGDDGKDPRRPKRPRTILTTQQRRAFKASFEVSSKPCRKVRETLAAETGLSVRVVQVWFQNQRAKMKKLARRHQQQQEQQNSQRLGQEVLSSRMEGMMASYTPLAPPQQQIVAMEQSPYGSSDPFQQGLTPPQMPGDHMNPYGNDSIFHDIDSDTSLTSLSDCFLGSSDVGSLQARVGNPIDRLYSMQSSYFAS.

LIM zinc-binding domains lie at 56–106 and 115–168; these read CEGC…CKQD and CSGC…CKGD. Disordered stretches follow at residues 176-229 and 326-346; these read LSSV…LTTQ and PYGS…PGDH. The homeobox DNA-binding region spans 219–278; it reads PKRPRTILTTQQRRAFKASFEVSSKPCRKVRETLAAETGLSVRVVQVWFQNQRAKMKKLA. Residues 326-338 show a composition bias toward polar residues; that stretch reads PYGSSDPFQQGLT.

Interacts with DHX9. Expressed in most tissues. Highest levels in testis, thyroid, duodenum, skeletal muscle, and pancreatic islets.

It is found in the nucleus. Transcription factor involved in the regulation of podocyte-expressed genes. Essential for the specification of dorsal limb fate at both the zeugopodal and autopodal levels. The protein is LIM homeobox transcription factor 1-beta (LMX1B) of Homo sapiens (Human).